We begin with the raw amino-acid sequence, 145 residues long: Extracellular globin-2 (145 aa).

A Globin domain is found at 3-145 (QCGVLEGLKV…HIEDGIKGHH (143 aa)). Cysteine 4 and cysteine 133 are joined by a disulfide. Heme b is bound at residue histidine 96.

Belongs to the globin family. In terms of assembly, the extracellular hemoglobin of the earthworm consists of 12 subunits that have a hexagonal bilayer structure with a molecular weight near 3.8 million. Each one-twelfth subunit is composed primarily of disulfide linked trimers (chains A, B, and C) and monomers (chain D).

This chain is Extracellular globin-2, found in Lumbricus terrestris (Common earthworm).